We begin with the raw amino-acid sequence, 312 residues long: tRNA dimethylallyltransferase (312 aa).

19-26 provides a ligand contact to ATP; the sequence is GPSGSGKS. Residue 21-26 participates in substrate binding; sequence SGSGKS. Positions 44-47 are interaction with substrate tRNA; that stretch reads DSLS.

It belongs to the IPP transferase family. As to quaternary structure, monomer. The cofactor is Mg(2+).

The enzyme catalyses adenosine(37) in tRNA + dimethylallyl diphosphate = N(6)-dimethylallyladenosine(37) in tRNA + diphosphate. In terms of biological role, catalyzes the transfer of a dimethylallyl group onto the adenine at position 37 in tRNAs that read codons beginning with uridine, leading to the formation of N6-(dimethylallyl)adenosine (i(6)A). The polypeptide is tRNA dimethylallyltransferase (Helicobacter pylori (strain J99 / ATCC 700824) (Campylobacter pylori J99)).